The primary structure comprises 261 residues: Phosphatidylglycerol--prolipoprotein diacylglyceryl transferase (261 aa).

4 consecutive transmembrane segments (helical) span residues 13-33 (LQIR…YWYI), 50-70 (VISW…ILFY), 86-106 (WNGG…MYIF), and 112-132 (IDVL…IFFG). Arg133 contributes to the a 1,2-diacyl-sn-glycero-3-phospho-(1'-sn-glycerol) binding site. A run of 3 helical transmembrane segments spans residues 169–189 (LYEA…LFFF), 197–217 (GMLS…IEFV), and 232–252 (ITMG…FIKL).

It belongs to the Lgt family.

The protein resides in the cell inner membrane. It catalyses the reaction L-cysteinyl-[prolipoprotein] + a 1,2-diacyl-sn-glycero-3-phospho-(1'-sn-glycerol) = an S-1,2-diacyl-sn-glyceryl-L-cysteinyl-[prolipoprotein] + sn-glycerol 1-phosphate + H(+). It participates in protein modification; lipoprotein biosynthesis (diacylglyceryl transfer). In terms of biological role, catalyzes the transfer of the diacylglyceryl group from phosphatidylglycerol to the sulfhydryl group of the N-terminal cysteine of a prolipoprotein, the first step in the formation of mature lipoproteins. The sequence is that of Phosphatidylglycerol--prolipoprotein diacylglyceryl transferase from Ehrlichia canis (strain Jake).